The following is a 311-amino-acid chain: Ribosomal RNA small subunit methyltransferase H (311 aa).

Residues 35–37, Asp55, Phe80, Asp102, and Gln109 contribute to the S-adenosyl-L-methionine site; that span reads GGH.

The protein belongs to the methyltransferase superfamily. RsmH family.

The protein resides in the cytoplasm. It carries out the reaction cytidine(1402) in 16S rRNA + S-adenosyl-L-methionine = N(4)-methylcytidine(1402) in 16S rRNA + S-adenosyl-L-homocysteine + H(+). Its function is as follows. Specifically methylates the N4 position of cytidine in position 1402 (C1402) of 16S rRNA. This is Ribosomal RNA small subunit methyltransferase H from Pseudoalteromonas atlantica (strain T6c / ATCC BAA-1087).